The chain runs to 182 residues: Ribosome maturation factor RimM (182 aa).

Positions 103-182 constitute a PRC barrel domain; sequence EDDYYWKDLM…RVEVDWDPGF (80 aa).

The protein belongs to the RimM family. As to quaternary structure, binds ribosomal protein uS19.

The protein localises to the cytoplasm. Its function is as follows. An accessory protein needed during the final step in the assembly of 30S ribosomal subunit, possibly for assembly of the head region. Essential for efficient processing of 16S rRNA. May be needed both before and after RbfA during the maturation of 16S rRNA. It has affinity for free ribosomal 30S subunits but not for 70S ribosomes. This Yersinia pestis (strain Pestoides F) protein is Ribosome maturation factor RimM.